Here is a 267-residue protein sequence, read N- to C-terminus: Undecaprenyl-diphosphatase (267 aa).

7 helical membrane passes run Met1–Ile21, Ala39–Tyr59, Ala85–Val105, Leu117–Gly137, Phe189–Leu209, Leu220–Ile240, and Val246–Phe266.

It belongs to the UppP family.

It localises to the cell inner membrane. The enzyme catalyses di-trans,octa-cis-undecaprenyl diphosphate + H2O = di-trans,octa-cis-undecaprenyl phosphate + phosphate + H(+). Catalyzes the dephosphorylation of undecaprenyl diphosphate (UPP). Confers resistance to bacitracin. In Dichelobacter nodosus (strain VCS1703A), this protein is Undecaprenyl-diphosphatase.